A 96-amino-acid polypeptide reads, in one-letter code: Large ribosomal subunit protein uL18m (96 aa).

Belongs to the universal ribosomal protein uL18 family.

The protein resides in the mitochondrion. This chain is Large ribosomal subunit protein uL18m (RPL18), found in Reclinomonas americana.